The chain runs to 198 residues: Transcriptional regulator GfcR (198 aa).

It belongs to the purine/pyrimidine phosphoribosyltransferase family. GfcR subfamily.

The protein is Transcriptional regulator GfcR of Thermoplasma acidophilum (strain ATCC 25905 / DSM 1728 / JCM 9062 / NBRC 15155 / AMRC-C165).